A 128-amino-acid polypeptide reads, in one-letter code: MGLMWGLFSVIIASVAQLSLGFAASHLPPMTHLWDFIAALLAFGLDARILLLGLLGYLLSVFCWYKTLHKLALSKAYALLSMSYVLVWIASMVLPGWEGTFSLKALLGVACIMSGLMLIFLPTTKQRY.

Over 1–2 (MG) the chain is Cytoplasmic. The helical transmembrane segment at 3–23 (LMWGLFSVIIASVAQLSLGFA) threads the bilayer. The Periplasmic portion of the chain corresponds to 24–35 (ASHLPPMTHLWD). A helical transmembrane segment spans residues 36 to 56 (FIAALLAFGLDARILLLGLLG). Topologically, residues 57–76 (YLLSVFCWYKTLHKLALSKA) are cytoplasmic. The chain crosses the membrane as a helical span at residues 77–97 (YALLSMSYVLVWIASMVLPGW). Over 98 to 100 (EGT) the chain is Periplasmic. The helical transmembrane segment at 101–121 (FSLKALLGVACIMSGLMLIFL) threads the bilayer. Over 122 to 128 (PTTKQRY) the chain is Cytoplasmic.

The protein belongs to the ArnF family. As to quaternary structure, heterodimer of ArnE and ArnF.

Its subcellular location is the cell inner membrane. It participates in bacterial outer membrane biogenesis; lipopolysaccharide biosynthesis. In terms of biological role, translocates 4-amino-4-deoxy-L-arabinose-phosphoundecaprenol (alpha-L-Ara4N-phosphoundecaprenol) from the cytoplasmic to the periplasmic side of the inner membrane. The polypeptide is Probable 4-amino-4-deoxy-L-arabinose-phosphoundecaprenol flippase subunit ArnF (Shigella sonnei (strain Ss046)).